Consider the following 242-residue polypeptide: Small ribosomal subunit protein uS2 (242 aa).

It belongs to the universal ribosomal protein uS2 family.

The protein is Small ribosomal subunit protein uS2 of Vibrio vulnificus (strain CMCP6).